The sequence spans 331 residues: MARLTSFLLLLSLICFVPLCLCDKSYGGKLFPGYYAHSCPQVNEIVRSVVAKAVARETRMAASLLRLHFHDCFVQGCDGSLLLDSSGRVATEKNSNPNSKSARGFDVVDQIKAELEKQCPGTVSCADVLTLAARDSSVLTGGPSWVVPLGRRDSRSASLSQSNNNIPAPNNTFQTILSKFNRQGLDITDLVALSGSHTIGFSRCTSFRQRLYNQSGNGSPDMTLEQSFAANLRQRCPKSGGDQILSVLDIISAASFDNSYFKNLIENKGLLNSDQVLFSSNEKSRELVKKYAEDQGEFFEQFAESMIKMGNISPLTGSSGEIRKNCRKINS.

A signal peptide spans 1 to 22 (MARLTSFLLLLSLICFVPLCLC). 4 disulfides stabilise this stretch: C39–C119, C72–C77, C125–C326, and C204–C236. H70 functions as the Proton acceptor in the catalytic mechanism. 5 residues coordinate Ca(2+): D71, V74, G76, D78, and S80. Position 167 (P167) interacts with substrate. An N-linked (GlcNAc...) asparagine glycan is attached at N170. Residue H197 participates in heme b binding. T198 contacts Ca(2+). The N-linked (GlcNAc...) asparagine glycan is linked to N213. Ca(2+) contacts are provided by D249, S252, and D257.

Belongs to the peroxidase family. Classical plant (class III) peroxidase subfamily. Heme b is required as a cofactor. Ca(2+) serves as cofactor.

It is found in the secreted. It carries out the reaction 2 a phenolic donor + H2O2 = 2 a phenolic radical donor + 2 H2O. In terms of biological role, removal of H(2)O(2), oxidation of toxic reductants, biosynthesis and degradation of lignin, suberization, auxin catabolism, response to environmental stresses such as wounding, pathogen attack and oxidative stress. These functions might be dependent on each isozyme/isoform in each plant tissue. The protein is Peroxidase 49 (PER49) of Arabidopsis thaliana (Mouse-ear cress).